A 155-amino-acid polypeptide reads, in one-letter code: FHA domain-containing protein FhaB (155 aa).

A helical membrane pass occupies residues 6–28 (LQLTRAGFLMLLWVFIWSVLRIL). Position 36 is a phosphothreonine (threonine 36). In terms of domain architecture, FHA spans 83-132 (VLIGRADDSTLVLTDDYASTRHARLSMRGSEWYVEDLGSTNGTYLDRAKV).

Phosphorylated by PknB. Dephosphorylated by PstP.

It is found in the cell membrane. The sequence is that of FHA domain-containing protein FhaB (fhaB) from Mycobacterium tuberculosis (strain CDC 1551 / Oshkosh).